A 375-amino-acid polypeptide reads, in one-letter code: Chaperone protein DnaJ 1 (375 aa).

Residues 4–68 (DYYAILGVER…EKRRIVDMGG (65 aa)) form the J domain. The CR-type zinc finger occupies 127 to 209 (GTKKPITIDT…CGGDGRVRTQ (83 aa)). Zn(2+) is bound by residues Cys140, Cys143, Cys157, Cys160, Cys183, Cys186, Cys197, and Cys200. CXXCXGXG motif repeat units follow at residues 140-147 (CDRCEGTG), 157-164 (CSTCNGSG), 183-190 (CPTCRGTG), and 197-204 (CDKCGGDG).

The protein belongs to the DnaJ family. Homodimer. Requires Zn(2+) as cofactor.

Its subcellular location is the cytoplasm. Functionally, participates actively in the response to hyperosmotic and heat shock by preventing the aggregation of stress-denatured proteins and by disaggregating proteins, also in an autonomous, DnaK-independent fashion. Unfolded proteins bind initially to DnaJ; upon interaction with the DnaJ-bound protein, DnaK hydrolyzes its bound ATP, resulting in the formation of a stable complex. GrpE releases ADP from DnaK; ATP binding to DnaK triggers the release of the substrate protein, thus completing the reaction cycle. Several rounds of ATP-dependent interactions between DnaJ, DnaK and GrpE are required for fully efficient folding. Also involved, together with DnaK and GrpE, in the DNA replication of plasmids through activation of initiation proteins. This chain is Chaperone protein DnaJ 1, found in Corynebacterium diphtheriae (strain ATCC 700971 / NCTC 13129 / Biotype gravis).